The following is a 432-amino-acid chain: GRAM domain-containing protein 2B (432 aa).

Met1 bears the N-acetylmethionine mark. Disordered regions lie at residues 1-61 and 74-106; these read MTEL…SPDQ and DGASLASDKNDCKTESKNDPKTERKKSSSSSQY. Composition is skewed to basic and acidic residues over residues 9–39 and 81–99; these read EDTKPAKVLGKRESKLGSAHSEAENGVEEKK and DKNDCKTESKNDPKTERKK. The region spanning 110–177 is the GRAM domain; that stretch reads MHFHKLFLSV…FSVTLIKKTK (68 aa). Polar residues predominate over residues 220 to 233; it reads TSVGNSPNPSSAEN. The tract at residues 220-239 is disordered; the sequence is TSVGNSPNPSSAENSFRADR. Residues Ser225, Ser242, and Ser252 each carry the phosphoserine modification. A disordered region spans residues 262–285; the sequence is RQDMEGYSSSGSQTPESENSRDFH. Over residues 268–278 the composition is skewed to polar residues; that stretch reads YSSSGSQTPES.

The protein is GRAM domain-containing protein 2B (GRAMD2B) of Homo sapiens (Human).